The following is an 806-amino-acid chain: Leucine--tRNA ligase (806 aa).

A 'HIGH' region motif is present at residues 40–51 (PYPSGTGLHVGH). The short motif at 576–580 (KMSKS) is the 'KMSKS' region element. Lys-579 serves as a coordination point for ATP.

Belongs to the class-I aminoacyl-tRNA synthetase family.

Its subcellular location is the cytoplasm. The enzyme catalyses tRNA(Leu) + L-leucine + ATP = L-leucyl-tRNA(Leu) + AMP + diphosphate. In Prosthecochloris aestuarii (strain DSM 271 / SK 413), this protein is Leucine--tRNA ligase.